A 565-amino-acid polypeptide reads, in one-letter code: MLSFNNTTSASSFQSASSRYLMSSSSSIGPPQQQSAKLFPEHFYPSGLSPRQSEALERLRPNTASRERNIPIQFTGKNPTTNSALEEYKPVPHVQVTSPKSSIVPNFVSEQRGLQPQPTSQAPTNYRQFVAAPRSPRGYGDYPEMTGKASAAGDSEPVQIPIKTQTPITQARAQETKIPTIVSPHPVYYYDNQEQPIQQIREEQPNATMETKVTGQGQPKRVGRWTLAQLRQTDGIIPSQAGWNKGDSQKLMTNFGTPRNTNTRVKSENLQEIPEDIANRTHGEVRLQSGTNKYCSQRGMTGFGSGRDVCREGVRVAQNPADLAELPEEKIRMSEGIVRLQAGTNKYDSQKGMTGFGTGRRETTKMVDSKHPEYDHEKPDQSEIPLQSGTNKFASQKGMTGFGTARRETTKMVDSNHPDYSHECSIDQTTIPSQMGSNQYASQKGMTGFGQPRWEVLDPSISWQNRKSQGMVRLQSGTNRFASQAGMIGFGTCRNTTFEAEGGELPYEAMKVSETIIPSQAGWNKGDSQKKMTSFGAPRDVKGKHLKRIWELEYPEEAEISLDRL.

Positions 1–27 (MLSFNNTTSASSFQSASSRYLMSSSSS) are enriched in low complexity. Disordered stretches follow at residues 1–83 (MLSF…TTNS) and 237–262 (IPSQAGWNKGDSQKLMTNFGTPRNTN). The span at 54-69 (EALERLRPNTASRERN) shows a compositional bias: basic and acidic residues. Calponin-like repeat units follow at residues 237-262 (IPSQAGWNKGDSQKLMTNFGTPRNTN), 285-310 (VRLQSGTNKYCSQRGMTGFGSGRDVC), and 338-363 (VRLQAGTNKYDSQKGMTGFGTGRRET). Residues 250–262 (KLMTNFGTPRNTN) show a composition bias toward polar residues. The span at 369-381 (SKHPEYDHEKPDQ) shows a compositional bias: basic and acidic residues. A disordered region spans residues 369 to 400 (SKHPEYDHEKPDQSEIPLQSGTNKFASQKGMT). Positions 384–398 (IPLQSGTNKFASQKG) are enriched in polar residues. Calponin-like repeat units follow at residues 384–409 (IPLQSGTNKFASQKGMTGFGTARRET), 431–456 (IPSQMGSNQYASQKGMTGFGQPRWEV), 472–497 (VRLQSGTNRFASQAGMIGFGTCRNTT), and 517–542 (IPSQAGWNKGDSQKKMTSFGAPRDVK).

This sequence belongs to the calponin family. As to quaternary structure, monomer. Interacts with F-actin. Interacts with myosin. Expressed in the body wall muscles. Isoform a: Expression in the pharynx, anal depressor muscle, uterine muscle, vulva and unidentified neurons in the head and the ventral region. Isoform b: Expression in the body wall muscles, spermatheca, vulva and in the myoepithelial sheath.

It is found in the cytoplasm. It localises to the myofibril. Its subcellular location is the sarcomere. The protein resides in the i band. In terms of biological role, thin filament-associated protein that is implicated in actin bundling and actin filament dynamics. Exhibits F-actin cross-linking activity. Required for the maintenance of sarcomeric actin organization in striated muscles. Competes with unc-60 isoform b for actin binding and protects actin filaments from depolymerization by unc-60, thereby contributing to actin filament stability. Cooperates with myosin to form actomyosin bundles and inhibits actomyosin ATPase activity and actomyosin motility. Might protect the myofilaments from mechanical stress. Its function is as follows. Acts as a negative regulator of myosin-dependent contractility of smooth muscle-like cells in the somatic gonad. The chain is Protein unc-87 (unc-87) from Caenorhabditis elegans.